An 83-amino-acid chain; its full sequence is Mitochondrial import inner membrane translocase subunit Tim8 B (83 aa).

Ala2 is subject to N-acetylalanine. The Twin CX3C motif signature appears at Cys36–Cys59. Disulfide bonds link Cys36–Cys59 and Cys40–Cys55.

It belongs to the small Tim family. In terms of assembly, heterohexamer; possibly composed of 3 copies of TIMM8B and 3 copies of TIMM13, named soluble 70 kDa complex. Associates with the TIM22 complex, whose core is composed of TIMM22.

Its subcellular location is the mitochondrion inner membrane. Its function is as follows. Probable mitochondrial intermembrane chaperone that participates in the import and insertion of some multi-pass transmembrane proteins into the mitochondrial inner membrane. Also required for the transfer of beta-barrel precursors from the TOM complex to the sorting and assembly machinery (SAM complex) of the outer membrane. Acts as a chaperone-like protein that protects the hydrophobic precursors from aggregation and guide them through the mitochondrial intermembrane space. In Bos taurus (Bovine), this protein is Mitochondrial import inner membrane translocase subunit Tim8 B (TIMM8B).